We begin with the raw amino-acid sequence, 1318 residues long: Guanine nucleotide exchange factor LTE1 (1318 aa).

Residues 29 to 164 form the N-terminal Ras-GEF domain; the sequence is NKNEVIQADI…CLISLKKAWL (136 aa). 2 disordered regions span residues 694–718 and 842–861; these read LSIL…SESI and IGSP…AYSQ. Polar residues predominate over residues 844 to 861; sequence SPETASPRKVNSNNAYSQ. Residues 1073–1314 form the Ras-GEF domain; that stretch reads ESKDVAQQFT…SQDEIEHLTA (242 aa).

The protein belongs to the LTE1 family.

It localises to the cytoplasm. Its subcellular location is the bud. In terms of biological role, GDP-GTP exchange factor component of the mitotic exit network (MEN). Fine-tunes the timing of the mitotic exit and couples this event with cytokinesis. May also be involved in proprotein-processing in the secretory pathway. In Candida glabrata (strain ATCC 2001 / BCRC 20586 / JCM 3761 / NBRC 0622 / NRRL Y-65 / CBS 138) (Yeast), this protein is Guanine nucleotide exchange factor LTE1 (LTE1).